A 239-amino-acid chain; its full sequence is Uracil-DNA glycosylase (239 aa).

The active-site Proton acceptor is the Asp-65.

Belongs to the uracil-DNA glycosylase (UDG) superfamily. UNG family.

It localises to the cytoplasm. It carries out the reaction Hydrolyzes single-stranded DNA or mismatched double-stranded DNA and polynucleotides, releasing free uracil.. Its function is as follows. Excises uracil residues from the DNA which can arise as a result of misincorporation of dUMP residues by DNA polymerase or due to deamination of cytosine. This chain is Uracil-DNA glycosylase, found in Levilactobacillus brevis (strain ATCC 367 / BCRC 12310 / CIP 105137 / JCM 1170 / LMG 11437 / NCIMB 947 / NCTC 947) (Lactobacillus brevis).